The sequence spans 175 residues: Regenerating islet-derived protein 3-alpha (175 aa).

An N-terminal signal peptide occupies residues 1–26; it reads MLPHLVLNSISWMLLSCLLFVFQVQG. The propeptide occupies 27–37; sequence EDFQKEVPSPR. Cystine bridges form between cysteine 40-cysteine 51, cysteine 68-cysteine 171, and cysteine 146-cysteine 163. In terms of domain architecture, C-type lectin spans 47 to 172; it reads YRSHCYALVM…CDGTLPFVCK (126 aa). Positions 50, 107, 121, and 145 each coordinate Zn(2+). Residues 103-118 form a sufficient to activate EXTL3 region; it reads WIGLHDPTMGQQPNGG.

As to quaternary structure, forms a hexameric membrane-permeabilizing oligomeric pore on membrane phospholipids. The hexamer is formed by three dimers related by helical symmetry. Forms filaments, filamentation traps pore complexes and limits damage to host cells. Interacts with EXTL3. Proteolytic processing by trypsin removes an inhibitory N-terminal propeptide and is essential for peptidoglycan binding and antibacterial activity. In terms of tissue distribution, small intestine and pancreas.

The protein resides in the secreted. Bactericidal C-type lectin. The lack of the EPN motif may explain its inability to bind peptidoglycan. Its function is as follows. Acts as a hormone in response to different stimuli like anti-inflammatory signals, such as IL17A, or gut microbiome. Secreted by different cell types to activate its receptor EXTL3 and induce cell specific signaling pathways. Induced by IL17A in keratinocytes, regulates keratinocyte proliferation and differentiation after skin injury via activation of EXTL3-PI3K-AKT signaling pathway. In parallel, inhibits skin inflammation through the inhibition of inflammatory cytokines such as IL6 and TNF. In pancreas, is able to permealize beta-cells membrane and stimulate their proliferation. This is Regenerating islet-derived protein 3-alpha (Reg3a) from Mus musculus (Mouse).